A 178-amino-acid chain; its full sequence is ATP synthase subunit delta (178 aa).

This sequence belongs to the ATPase delta chain family. F-type ATPases have 2 components, F(1) - the catalytic core - and F(0) - the membrane proton channel. F(1) has five subunits: alpha(3), beta(3), gamma(1), delta(1), epsilon(1). F(0) has three main subunits: a(1), b(2) and c(10-14). The alpha and beta chains form an alternating ring which encloses part of the gamma chain. F(1) is attached to F(0) by a central stalk formed by the gamma and epsilon chains, while a peripheral stalk is formed by the delta and b chains.

Its subcellular location is the cell inner membrane. F(1)F(0) ATP synthase produces ATP from ADP in the presence of a proton or sodium gradient. F-type ATPases consist of two structural domains, F(1) containing the extramembraneous catalytic core and F(0) containing the membrane proton channel, linked together by a central stalk and a peripheral stalk. During catalysis, ATP synthesis in the catalytic domain of F(1) is coupled via a rotary mechanism of the central stalk subunits to proton translocation. Its function is as follows. This protein is part of the stalk that links CF(0) to CF(1). It either transmits conformational changes from CF(0) to CF(1) or is implicated in proton conduction. This Marinomonas sp. (strain MWYL1) protein is ATP synthase subunit delta.